We begin with the raw amino-acid sequence, 492 residues long: Serine incorporator 4 (492 aa).

10 consecutive transmembrane segments (helical) span residues 59 to 79 (YILL…KTVV), 113 to 133 (AVYR…VLLV), 148 to 168 (SFWS…FCIP), 179 to 199 (IGIC…TAFA), 219 to 239 (GVSL…VLLF), 254 to 274 (LLSL…APCI), 281 to 301 (SGLL…FSAL), 330 to 350 (IPDT…VLFA), 421 to 441 (GFHF…TNWF), and 464 to 484 (VASC…PLLA).

Belongs to the TDE1 family.

The protein resides in the membrane. Functionally, incorporates a polar amino acid serine into membranes and facilitates the synthesis of two serine-derived lipids, phosphatidylserine and sphingolipids. The chain is Serine incorporator 4 (Serinc4) from Mus musculus (Mouse).